The chain runs to 330 residues: Phenylalanine--tRNA ligase alpha subunit (330 aa).

E246 provides a ligand contact to Mg(2+).

This sequence belongs to the class-II aminoacyl-tRNA synthetase family. Phe-tRNA synthetase alpha subunit type 1 subfamily. Tetramer of two alpha and two beta subunits. It depends on Mg(2+) as a cofactor.

The protein resides in the cytoplasm. The catalysed reaction is tRNA(Phe) + L-phenylalanine + ATP = L-phenylalanyl-tRNA(Phe) + AMP + diphosphate + H(+). In Campylobacter jejuni subsp. doylei (strain ATCC BAA-1458 / RM4099 / 269.97), this protein is Phenylalanine--tRNA ligase alpha subunit.